An 83-amino-acid polypeptide reads, in one-letter code: Protein kreg-1 (83 aa).

The tract at residues 62–83 (GHHHHHHGHHFGHHHHHHHGHH) is disordered.

As to expression, weakly expressed in the intestine, but expression is up-regulated in response to Cu(2+).

Functionally, plays a role in the stress response to heavy metals such as copper, probably in a fos-1/kgb-1-dependent manner. In Caenorhabditis elegans, this protein is Protein kreg-1.